Reading from the N-terminus, the 147-residue chain is Nucleoside diphosphate kinase (147 aa).

Residues Lys9, Phe57, Arg85, Thr91, Arg102, and Asn112 each coordinate ATP. Catalysis depends on His115, which acts as the Pros-phosphohistidine intermediate.

It belongs to the NDK family. The cofactor is Mg(2+).

The protein resides in the cytoplasm. The catalysed reaction is a 2'-deoxyribonucleoside 5'-diphosphate + ATP = a 2'-deoxyribonucleoside 5'-triphosphate + ADP. The enzyme catalyses a ribonucleoside 5'-diphosphate + ATP = a ribonucleoside 5'-triphosphate + ADP. Functionally, major role in the synthesis of nucleoside triphosphates other than ATP. The ATP gamma phosphate is transferred to the NDP beta phosphate via a ping-pong mechanism, using a phosphorylated active-site intermediate. The polypeptide is Nucleoside diphosphate kinase (Ignicoccus hospitalis (strain KIN4/I / DSM 18386 / JCM 14125)).